Reading from the N-terminus, the 449-residue chain is UDP-N-acetylmuramoylalanine--D-glutamate ligase (449 aa).

118–124 (GTNGKTT) is a binding site for ATP.

This sequence belongs to the MurCDEF family.

It is found in the cytoplasm. It catalyses the reaction UDP-N-acetyl-alpha-D-muramoyl-L-alanine + D-glutamate + ATP = UDP-N-acetyl-alpha-D-muramoyl-L-alanyl-D-glutamate + ADP + phosphate + H(+). The protein operates within cell wall biogenesis; peptidoglycan biosynthesis. In terms of biological role, cell wall formation. Catalyzes the addition of glutamate to the nucleotide precursor UDP-N-acetylmuramoyl-L-alanine (UMA). This is UDP-N-acetylmuramoylalanine--D-glutamate ligase from Staphylococcus carnosus (strain TM300).